Reading from the N-terminus, the 141-residue chain is Hemoglobin subunit alpha (141 aa).

The 141-residue stretch at 1-141 folds into the Globin domain; it reads VLSAEDKANV…VSTVLTSKYR (141 aa). S3 is subject to Phosphoserine. An N6-succinyllysine mark is found at K7 and K11. K16 is subject to N6-acetyllysine; alternate. Residue K16 is modified to N6-succinyllysine; alternate. Residue Y24 is modified to Phosphotyrosine. Phosphoserine is present on S35. At K40 the chain carries N6-succinyllysine. A Phosphoserine modification is found at S49. H58 lines the O2 pocket. Position 87 (H87) interacts with heme b. At S102 the chain carries Phosphoserine. T108 is modified (phosphothreonine). Phosphoserine occurs at positions 124 and 131. A phosphothreonine mark is found at T134 and T137. Phosphoserine is present on S138.

This sequence belongs to the globin family. In terms of assembly, heterotetramer of two alpha chains and two beta chains. In terms of tissue distribution, red blood cells.

Involved in oxygen transport from the lung to the various peripheral tissues. The chain is Hemoglobin subunit alpha from Peromyscus crinitus (Canyon mouse).